The following is a 118-amino-acid chain: Small ribosomal subunit protein uS13 (118 aa).

The segment at 94–118 (SLPLRGQRTKTNARTRKGPRKPIKK) is disordered.

Belongs to the universal ribosomal protein uS13 family. In terms of assembly, part of the 30S ribosomal subunit. Forms a loose heterodimer with protein S19. Forms two bridges to the 50S subunit in the 70S ribosome.

Its function is as follows. Located at the top of the head of the 30S subunit, it contacts several helices of the 16S rRNA. In the 70S ribosome it contacts the 23S rRNA (bridge B1a) and protein L5 of the 50S subunit (bridge B1b), connecting the 2 subunits; these bridges are implicated in subunit movement. Contacts the tRNAs in the A and P-sites. This is Small ribosomal subunit protein uS13 from Shewanella oneidensis (strain ATCC 700550 / JCM 31522 / CIP 106686 / LMG 19005 / NCIMB 14063 / MR-1).